The chain runs to 442 residues: tRNA modification GTPase MnmE (442 aa).

Arginine 23, glutamate 82, and lysine 121 together coordinate (6S)-5-formyl-5,6,7,8-tetrahydrofolate. Positions 217–363 (PFKIAIIGET…LVDLLTKYIN (147 aa)) constitute a TrmE-type G domain. K(+) is bound at residue asparagine 227. GTP-binding positions include 227 to 232 (NVGKSS), 246 to 252 (SNIKGST), and 271 to 274 (DTAG). Residue serine 231 participates in Mg(2+) binding. Positions 246, 248, and 251 each coordinate K(+). A Mg(2+)-binding site is contributed by threonine 252. Position 442 (lysine 442) interacts with (6S)-5-formyl-5,6,7,8-tetrahydrofolate.

It belongs to the TRAFAC class TrmE-Era-EngA-EngB-Septin-like GTPase superfamily. TrmE GTPase family. Homodimer. Heterotetramer of two MnmE and two MnmG subunits. K(+) is required as a cofactor.

The protein resides in the cytoplasm. Functionally, exhibits a very high intrinsic GTPase hydrolysis rate. Involved in the addition of a carboxymethylaminomethyl (cmnm) group at the wobble position (U34) of certain tRNAs, forming tRNA-cmnm(5)s(2)U34. This Mycoplasma genitalium (strain ATCC 33530 / DSM 19775 / NCTC 10195 / G37) (Mycoplasmoides genitalium) protein is tRNA modification GTPase MnmE.